Consider the following 271-residue polypeptide: N-acylmannosamine 1-dehydrogenase (271 aa).

An NAD(+)-binding site is contributed by 20 to 44; sequence VTGAAGGIGRATVEAYLREGASVVA. A substrate-binding site is contributed by S153. The active-site Proton acceptor is Y166.

The protein belongs to the short-chain dehydrogenases/reductases (SDR) family.

It catalyses the reaction an N-acyl-D-mannosamine + NAD(+) = an N-acyl-D-mannosaminolactone + NADH + H(+). Functionally, acts on acetyl-D-mannosamine and glycolyl-D-mannosamine. This is N-acylmannosamine 1-dehydrogenase from Flavobacterium sp. (strain 141-8).